A 343-amino-acid chain; its full sequence is Pyridoxal 5'-phosphate synthase subunit PDX1 (343 aa).

Asp73 lines the D-ribose 5-phosphate pocket. The active-site Schiff-base intermediate with D-ribose 5-phosphate is Lys130. Gly202 is a binding site for D-ribose 5-phosphate. Gln214 contacts D-glyceraldehyde 3-phosphate. D-ribose 5-phosphate contacts are provided by residues Gly263 and 284-285 (GS).

Belongs to the PdxS/SNZ family.

The enzyme catalyses aldehydo-D-ribose 5-phosphate + D-glyceraldehyde 3-phosphate + L-glutamine = pyridoxal 5'-phosphate + L-glutamate + phosphate + 3 H2O + H(+). It participates in cofactor biosynthesis; pyridoxal 5'-phosphate biosynthesis. Its function is as follows. Catalyzes the formation of pyridoxal 5'-phosphate from ribose 5-phosphate (RBP), glyceraldehyde 3-phosphate (G3P) and ammonia. The ammonia is provided by PDX2. Can also use ribulose 5-phosphate and dihydroxyacetone phosphate as substrates, resulting from enzyme-catalyzed isomerization of RBP and G3P, respectively. Also plays an indirect role in resistance to singlet oxygen-generating photosensitizers. This Cercospora nicotianae (Barn spot disease fungus) protein is Pyridoxal 5'-phosphate synthase subunit PDX1 (PDX1).